We begin with the raw amino-acid sequence, 141 residues long: Hemoglobin subunit alpha-A (141 aa).

Residues 1–141 (VLSANDKTNV…VGNVLSAKYR (141 aa)) enclose the Globin domain. His-58 is an O2 binding site. Position 87 (His-87) interacts with heme b.

This sequence belongs to the globin family. As to quaternary structure, heterotetramer of two alpha chains and two beta chains. Red blood cells.

Involved in oxygen transport from the lung to the various peripheral tissues. This Trigonoceps occipitalis (White-headed vulture) protein is Hemoglobin subunit alpha-A (HBAA).